The sequence spans 212 residues: Peptide methionine sulfoxide reductase MsrA (212 aa).

Cys-52 is a catalytic residue.

The protein belongs to the MsrA Met sulfoxide reductase family.

It carries out the reaction L-methionyl-[protein] + [thioredoxin]-disulfide + H2O = L-methionyl-(S)-S-oxide-[protein] + [thioredoxin]-dithiol. The catalysed reaction is [thioredoxin]-disulfide + L-methionine + H2O = L-methionine (S)-S-oxide + [thioredoxin]-dithiol. In terms of biological role, has an important function as a repair enzyme for proteins that have been inactivated by oxidation. Catalyzes the reversible oxidation-reduction of methionine sulfoxide in proteins to methionine. This Shigella boydii serotype 18 (strain CDC 3083-94 / BS512) protein is Peptide methionine sulfoxide reductase MsrA.